A 118-amino-acid chain; its full sequence is UPF0148 protein M1627_1409 (118 aa).

It belongs to the UPF0148 family.

The sequence is that of UPF0148 protein M1627_1409 from Saccharolobus islandicus (strain M.16.27) (Sulfolobus islandicus).